A 206-amino-acid chain; its full sequence is Imidazoleglycerol-phosphate dehydratase (206 aa).

Belongs to the imidazoleglycerol-phosphate dehydratase family.

The protein localises to the cytoplasm. The catalysed reaction is D-erythro-1-(imidazol-4-yl)glycerol 3-phosphate = 3-(imidazol-4-yl)-2-oxopropyl phosphate + H2O. The protein operates within amino-acid biosynthesis; L-histidine biosynthesis; L-histidine from 5-phospho-alpha-D-ribose 1-diphosphate: step 6/9. This Mycolicibacterium smegmatis (strain ATCC 700084 / mc(2)155) (Mycobacterium smegmatis) protein is Imidazoleglycerol-phosphate dehydratase.